The primary structure comprises 468 residues: MTQEKWGLLCQKLLKTVGQNNFTTWIEPLEFQALENGVAVFTVPTNFMGNYVSQNFSDLILYELNNAGEAVQRLAFRVAANSPMRPARAARPAAAAAAAAAAVEAPQVSAPRATDTSDVLDGLQAAPLDPRFTFDSFVVGKPNELAHAAARRVSEGGPVTFNPLVLYGGVGLGKTHLMHAIAWELKVKRPELNVLYLSAEQFMYRFVQALRERRMMDFKHLFRSVDVLMVDDVQFIAGKDSTQEEFFHTFNALVDQNKQIIISADRAPGEIKDLEDRVKSRLQCGLVVDLHPTDYELRLGILQTKVQMYRTTYPDLVIADGVLEFLAHRISTNVRVLEGALTRLFAFASLVGREIDMELTQDCLADVLRASERKITVEEIQRKVSDYYNIRLSDIIGPKRLRSYARPRQVAMYLCKQLTSRSLPEIGRRFGGRDHTTVMHGVKRIEELKLTDGQIAEDVEMLRRALEA.

A domain I, interacts with DnaA modulators region spans residues 1–90; that stretch reads MTQEKWGLLC…NSPMRPARAA (90 aa). The interval 91-126 is domain II; that stretch reads RPAAAAAAAAAAVEAPQVSAPRATDTSDVLDGLQAA. The segment at 127–348 is domain III, AAA+ region; sequence PLDPRFTFDS…GALTRLFAFA (222 aa). Positions 171, 173, 174, and 175 each coordinate ATP. Residues 349 to 468 form a domain IV, binds dsDNA region; sequence SLVGREIDME…VEMLRRALEA (120 aa).

It belongs to the DnaA family. Oligomerizes as a right-handed, spiral filament on DNA at oriC.

The protein resides in the cytoplasm. In terms of biological role, plays an essential role in the initiation and regulation of chromosomal replication. ATP-DnaA binds to the origin of replication (oriC) to initiate formation of the DNA replication initiation complex once per cell cycle. Binds the DnaA box (a 9 base pair repeat at the origin) and separates the double-stranded (ds)DNA. Forms a right-handed helical filament on oriC DNA; dsDNA binds to the exterior of the filament while single-stranded (ss)DNA is stabiized in the filament's interior. The ATP-DnaA-oriC complex binds and stabilizes one strand of the AT-rich DNA unwinding element (DUE), permitting loading of DNA polymerase. After initiation quickly degrades to an ADP-DnaA complex that is not apt for DNA replication. Binds acidic phospholipids. The chain is Chromosomal replication initiator protein DnaA from Ruegeria pomeroyi (strain ATCC 700808 / DSM 15171 / DSS-3) (Silicibacter pomeroyi).